Reading from the N-terminus, the 564-residue chain is 2-succinyl-5-enolpyruvyl-6-hydroxy-3-cyclohexene-1-carboxylate synthase (564 aa).

Belongs to the TPP enzyme family. MenD subfamily. As to quaternary structure, homodimer. It depends on Mg(2+) as a cofactor. The cofactor is Mn(2+). Requires thiamine diphosphate as cofactor.

It catalyses the reaction isochorismate + 2-oxoglutarate + H(+) = 5-enolpyruvoyl-6-hydroxy-2-succinyl-cyclohex-3-ene-1-carboxylate + CO2. It participates in quinol/quinone metabolism; 1,4-dihydroxy-2-naphthoate biosynthesis; 1,4-dihydroxy-2-naphthoate from chorismate: step 2/7. Its pathway is quinol/quinone metabolism; menaquinone biosynthesis. Catalyzes the thiamine diphosphate-dependent decarboxylation of 2-oxoglutarate and the subsequent addition of the resulting succinic semialdehyde-thiamine pyrophosphate anion to isochorismate to yield 2-succinyl-5-enolpyruvyl-6-hydroxy-3-cyclohexene-1-carboxylate (SEPHCHC). The polypeptide is 2-succinyl-5-enolpyruvyl-6-hydroxy-3-cyclohexene-1-carboxylate synthase (Photorhabdus laumondii subsp. laumondii (strain DSM 15139 / CIP 105565 / TT01) (Photorhabdus luminescens subsp. laumondii)).